The chain runs to 64 residues: H/ACA ribonucleoprotein complex subunit 3 (64 aa).

Belongs to the NOP10 family. In terms of assembly, component of the box H/ACA small nucleolar ribonucleoprotein (H/ACA snoRNP) complex consisting of Nop60B, Gar1, NPH2 and Nop10, and associated with H/ACA-type snoRNAs.

The protein resides in the nucleus. The protein localises to the nucleolus. Its function is as follows. Component of the box H/ACA small nucleolar ribonucleoprotein (H/ACA snoRNP) complex, which catalyzes pseudouridylation of rRNA. This involves the isomerization of uridine such that the ribose is subsequently attached to C5, instead of the normal N1. Pseudouridine ('psi') residues may serve to stabilize the conformation of rRNAs. Required for ribosome biogenesis. H/ACA snoRNP complex-dependent ribosome biogenesis is important in female germline cell differentiation during oogenesis. The polypeptide is H/ACA ribonucleoprotein complex subunit 3 (Drosophila melanogaster (Fruit fly)).